The following is a 389-amino-acid chain: NAD-dependent protein deacetylase sirtuin-2 (389 aa).

Residues Met1 to Gly34 form a disordered region. Ala2 is modified (N-acetylalanine). 3 positions are modified to phosphoserine: Ser23, Ser25, and Ser27. Residues Leu41 to Leu51 carry the Nuclear export signal motif. A Phosphoserine modification is found at Ser53. In terms of domain architecture, Deacetylase sirtuin-type spans Arg57–Lys338. Residues Ala85 to Thr89 and Asp95 to Arg97 each bind NAD(+). Ser100 is subject to Phosphoserine. Gln167–Asp170 provides a ligand contact to NAD(+). The Proton acceptor role is filled by His187. Zn(2+) contacts are provided by Cys195 and Cys200. Position 207 is a phosphoserine (Ser207). Zn(2+)-binding residues include Cys221 and Cys224. NAD(+)-binding positions include Thr262–Ser263, Asn286–Glu288, and Cys324. A disordered region spans residues Ser351–Gln389. The segment covering Pro361–Lys370 has biased composition (low complexity). Position 368 is a phosphoserine; by CDK2 and CDK5 (Ser368). Ser372 is modified (phosphoserine). Over residues Ala376 to Gln389 the composition is skewed to basic and acidic residues.

It belongs to the sirtuin family. Class I subfamily. In terms of assembly, interacts with CDC20, FOXO3 and FZR1. Associates with microtubules in primary cortical mature neurons. Homotrimer. Isoform 1 and isoform 2 interact (via both phosphorylated, unphosphorylated, active or inactive forms) with HDAC6; the interaction is necessary for the complex to interact with alpha-tubulin, suggesting that these proteins belong to a large complex that deacetylates the cytoskeleton. Interacts with FOXO1; the interaction is disrupted upon serum-starvation or oxidative stress, leading to increased level of acetylated FOXO1 and induction of autophagy. Interacts with RELA; the interaction occurs in the cytoplasm and is increased in a TNF-alpha-dependent manner. Interacts with HOXA10; the interaction is direct. Interacts with YWHAB and YWHAG; the interactions occur in a AKT-dependent manner and increase SIRT2-dependent TP53 deacetylation. Interacts with MAPK1/ERK2 and MAPK3/ERK1; the interactions increase SIRT2 stability and deacetylation activity. Interacts (phosphorylated form) with KMT5A isoform 2; the interaction is direct, stimulates KMT5A-mediated methyltransferase activity on histone at 'Lys-20' (H4K20me1) and is increased in a H(2)O(2)-induced oxidative stress-dependent manner. Interacts with G6PD; the interaction is enhanced by H(2)O(2) treatment. Interacts with a G1/S-specific cyclin E-CDK2 complex. Interacts with AURKA, CDK5R1 (p35 form) and CDK5 and HIF1A. Isoform 1, isoform 2 and isoform 5 interact (via C-terminus region) with EP300. Interacts with the tRNA ligase SARS1; recruited to the VEGFA promoter via interaction with SARS1. Interacts with BEX4; negatively regulates alpha-tubulin deacetylation by SIRT2. Requires Zn(2+) as cofactor. Post-translationally, phosphorylated at phosphoserine and phosphothreonine. Phosphorylated at Ser-368 by a mitotic kinase CDK1/cyclin B at the G2/M transition; phosphorylation regulates the delay in cell-cycle progression. Phosphorylated at Ser-368 by a mitotic kinase G1/S-specific cyclin E/Cdk2 complex; phosphorylation inactivates SIRT2-mediated alpha-tubulin deacetylation and thereby negatively regulates cell adhesion, cell migration and neurite outgrowth during neuronal differentiation. Phosphorylated by cyclin A/Cdk2 and p35-Cdk5 complexes and to a lesser extent by the cyclin D3/Cdk4 and cyclin B/Cdk1, in vitro. Dephosphorylated at Ser-368 by CDC14A and CDC14B around early anaphase. Acetylated by EP300; acetylation leads both to the decreased of SIRT2-mediated alpha-tubulin deacetylase activity and SIRT2-mediated down-regulation of TP53 transcriptional activity. In terms of processing, ubiquitinated. As to expression, isoform 1 is expressed in heart, liver and skeletal muscle, weakly expressed in the cortex. Isoform 2 is strongly expressed in the cortex, weakly expressed in heart and liver. Weakly expressed in several malignancies including breast, liver, brain, kidney and prostate cancers compared to normal tissues. Weakly expressed in glioma cell lines compared to normal brain tissues (at protein level). Widely expressed. Highly expressed in heart, brain and skeletal muscle, while it is weakly expressed in placenta and lung. Down-regulated in many gliomas suggesting that it may act as a tumor suppressor gene in human gliomas possibly through the regulation of microtubule network.

It localises to the nucleus. The protein localises to the cytoplasm. It is found in the perinuclear region. The protein resides in the cytoskeleton. Its subcellular location is the microtubule organizing center. It localises to the centrosome. The protein localises to the centriole. It is found in the spindle. The protein resides in the midbody. Its subcellular location is the chromosome. It localises to the perikaryon. The protein localises to the cell projection. It is found in the growth cone. The protein resides in the myelin membrane. It catalyses the reaction N(6)-acetyl-L-lysyl-[protein] + NAD(+) + H2O = 2''-O-acetyl-ADP-D-ribose + nicotinamide + L-lysyl-[protein]. It carries out the reaction N(6)-tetradecanoyl-L-lysyl-[protein] + NAD(+) + H2O = 2''-O-tetradecanoyl-ADP-D-ribose + nicotinamide + L-lysyl-[protein]. The enzyme catalyses N(6)-hexadecanoyl-L-lysyl-[protein] + NAD(+) + H2O = 2''-O-hexadecanoyl-ADP-D-ribose + nicotinamide + L-lysyl-[protein]. Its activity is regulated as follows. Inhibited by Sirtinol, A3 and M15 small molecules. Inhibited by nicotinamide. Inhibited by a macrocyclic peptide inhibitor S2iL5. Inhibited by EP300-induced acetylation. Its function is as follows. NAD-dependent protein deacetylase, which deacetylates internal lysines on histone and alpha-tubulin as well as many other proteins such as key transcription factors. Participates in the modulation of multiple and diverse biological processes such as cell cycle control, genomic integrity, microtubule dynamics, cell differentiation, metabolic networks, and autophagy. Plays a major role in the control of cell cycle progression and genomic stability. Functions in the antephase checkpoint preventing precocious mitotic entry in response to microtubule stress agents, and hence allowing proper inheritance of chromosomes. Positively regulates the anaphase promoting complex/cyclosome (APC/C) ubiquitin ligase complex activity by deacetylating CDC20 and FZR1, then allowing progression through mitosis. Associates both with chromatin at transcriptional start sites (TSSs) and enhancers of active genes. Plays a role in cell cycle and chromatin compaction through epigenetic modulation of the regulation of histone H4 'Lys-20' methylation (H4K20me1) during early mitosis. Specifically deacetylates histone H4 at 'Lys-16' (H4K16ac) between the G2/M transition and metaphase enabling H4K20me1 deposition by KMT5A leading to ulterior levels of H4K20me2 and H4K20me3 deposition throughout cell cycle, and mitotic S-phase progression. Deacetylates KMT5A modulating KMT5A chromatin localization during the mitotic stress response. Also deacetylates histone H3 at 'Lys-57' (H3K56ac) during the mitotic G2/M transition. Upon bacterium Listeria monocytogenes infection, deacetylates 'Lys-18' of histone H3 in a receptor tyrosine kinase MET- and PI3K/Akt-dependent manner, thereby inhibiting transcriptional activity and promoting late stages of listeria infection. During oocyte meiosis progression, may deacetylate histone H4 at 'Lys-16' (H4K16ac) and alpha-tubulin, regulating spindle assembly and chromosome alignment by influencing microtubule dynamics and kinetochore function. Deacetylates histone H4 at 'Lys-16' (H4K16ac) at the VEGFA promoter and thereby contributes to regulate expression of VEGFA, a key regulator of angiogenesis. Deacetylates alpha-tubulin at 'Lys-40' and hence controls neuronal motility, oligodendroglial cell arbor projection processes and proliferation of non-neuronal cells. Phosphorylation at Ser-368 by a G1/S-specific cyclin E-CDK2 complex inactivates SIRT2-mediated alpha-tubulin deacetylation, negatively regulating cell adhesion, cell migration and neurite outgrowth during neuronal differentiation. Deacetylates PARD3 and participates in the regulation of Schwann cell peripheral myelination formation during early postnatal development and during postinjury remyelination. Involved in several cellular metabolic pathways. Plays a role in the regulation of blood glucose homeostasis by deacetylating and stabilizing phosphoenolpyruvate carboxykinase PCK1 activity in response to low nutrient availability. Acts as a key regulator in the pentose phosphate pathway (PPP) by deacetylating and activating the glucose-6-phosphate G6PD enzyme, and therefore, stimulates the production of cytosolic NADPH to counteract oxidative damage. Maintains energy homeostasis in response to nutrient deprivation as well as energy expenditure by inhibiting adipogenesis and promoting lipolysis. Attenuates adipocyte differentiation by deacetylating and promoting FOXO1 interaction to PPARG and subsequent repression of PPARG-dependent transcriptional activity. Plays a role in the regulation of lysosome-mediated degradation of protein aggregates by autophagy in neuronal cells. Deacetylates FOXO1 in response to oxidative stress or serum deprivation, thereby negatively regulating FOXO1-mediated autophagy. Deacetylates a broad range of transcription factors and co-regulators regulating target gene expression. Deacetylates transcriptional factor FOXO3 stimulating the ubiquitin ligase SCF(SKP2)-mediated FOXO3 ubiquitination and degradation. Deacetylates HIF1A and therefore promotes HIF1A degradation and inhibition of HIF1A transcriptional activity in tumor cells in response to hypoxia. Deacetylates RELA in the cytoplasm inhibiting NF-kappaB-dependent transcription activation upon TNF-alpha stimulation. Inhibits transcriptional activation by deacetylating p53/TP53 and EP300. Also deacetylates EIF5A. Functions as a negative regulator on oxidative stress-tolerance in response to anoxia-reoxygenation conditions. Plays a role as tumor suppressor. In addition to protein deacetylase activity, also has activity toward long-chain fatty acyl groups and mediates protein-lysine demyristoylation and depalmitoylation of target proteins, such as ARF6 and KRAS, thereby regulating their association with membranes. Deacetylates EP300, alpha-tubulin and histone H3 and H4. Functionally, lacks deacetylation activity, at least toward known SIRT2 targets. The protein is NAD-dependent protein deacetylase sirtuin-2 (SIRT2) of Homo sapiens (Human).